Consider the following 238-residue polypeptide: Pyridoxine 5'-phosphate synthase (238 aa).

Residue Asn7 coordinates 3-amino-2-oxopropyl phosphate. A 1-deoxy-D-xylulose 5-phosphate-binding site is contributed by 9–10 (DH). Arg18 is a 3-amino-2-oxopropyl phosphate binding site. Residue His43 is the Proton acceptor of the active site. Positions 45 and 50 each coordinate 1-deoxy-D-xylulose 5-phosphate. The active-site Proton acceptor is Glu70. Thr100 contributes to the 1-deoxy-D-xylulose 5-phosphate binding site. Residue His190 is the Proton donor of the active site. Residues Gly191 and 212 to 213 (GH) contribute to the 3-amino-2-oxopropyl phosphate site.

This sequence belongs to the PNP synthase family. Homooctamer; tetramer of dimers.

Its subcellular location is the cytoplasm. The enzyme catalyses 3-amino-2-oxopropyl phosphate + 1-deoxy-D-xylulose 5-phosphate = pyridoxine 5'-phosphate + phosphate + 2 H2O + H(+). Its pathway is cofactor biosynthesis; pyridoxine 5'-phosphate biosynthesis; pyridoxine 5'-phosphate from D-erythrose 4-phosphate: step 5/5. Its function is as follows. Catalyzes the complicated ring closure reaction between the two acyclic compounds 1-deoxy-D-xylulose-5-phosphate (DXP) and 3-amino-2-oxopropyl phosphate (1-amino-acetone-3-phosphate or AAP) to form pyridoxine 5'-phosphate (PNP) and inorganic phosphate. In Prochlorococcus marinus subsp. pastoris (strain CCMP1986 / NIES-2087 / MED4), this protein is Pyridoxine 5'-phosphate synthase.